The following is a 296-amino-acid chain: Deleted in azoospermia-like (296 aa).

The span at 1–18 (MSAANPETPNSTISREAN) shows a compositional bias: polar residues. The disordered stretch occupies residues 1–25 (MSAANPETPNSTISREANTQSSSAA). The 76-residue stretch at 40-115 (NTVFVGGIDV…KKLKLGPAIR (76 aa)) folds into the RRM domain. The interval 80–132 (KGYGFVSFFNDVDVQKIVESQINFHGKKLKLGPAIRKQNLCAYHVQPRPLVFN) is homodimerization. One can recognise a DAZ domain in the interval 167 to 190 (AYPPYPNSPVQVITGYQLPVYNYQ). Y277 carries the phosphotyrosine modification.

The protein belongs to the RRM DAZ family. Homodimer and heterodimer. Forms a heterodimer with DAZ. Interacts with BOLL, DAZAP1 and DAZAP2. Interacts with PUM2 Multiple DAZL RRMs can bind to a single RNA containing multiple GUU triplets. In terms of tissue distribution, testis specific.

It is found in the cytoplasm. The protein resides in the nucleus. In terms of biological role, RNA-binding protein, which is essential for gametogenesis in both males and females. Plays a central role during spermatogenesis. Acts by binding to the 3'-UTR of mRNA, specifically recognizing GUU triplets, and thereby regulating the translation of key transcripts. The sequence is that of Deleted in azoospermia-like (DAZL) from Callithrix jacchus (White-tufted-ear marmoset).